Reading from the N-terminus, the 805-residue chain is Mitochondrial intermediate peptidase (805 aa).

Residues 1–25 (MIQPLVKASRPRLWVCSDCLLRRTL) constitute a mitochondrion transit peptide. A Zn(2+)-binding site is contributed by His578. Glu579 is an active-site residue. Residues His582 and His585 each coordinate Zn(2+).

It belongs to the peptidase M3 family. Requires Zn(2+) as cofactor.

The protein localises to the mitochondrion matrix. It carries out the reaction Release of an N-terminal octapeptide as second stage of processing of some proteins imported into the mitochondrion.. Cleaves proteins, imported into the mitochondrion, to their mature size. While most mitochondrial precursor proteins are processed to the mature form in one step by mitochondrial processing peptidase (MPP), the sequential cleavage by MIP of an octapeptide after initial processing by MPP is a required step for a subgroup of nuclear-encoded precursor proteins destined for the matrix or the inner membrane. This is Mitochondrial intermediate peptidase (oct-1) from Neurospora crassa (strain ATCC 24698 / 74-OR23-1A / CBS 708.71 / DSM 1257 / FGSC 987).